We begin with the raw amino-acid sequence, 233 residues long: Bcl-2-like protein 1 (233 aa).

The BH4 motif lies at 4-24 (SNRELVVDFLSYKLSQKGYSW). Positions 29-71 (DVEENRTEAPEGTESEAETPSAINGNPSWHLADSPAVNGATGH) are disordered. At Ser-49 the chain carries Phosphoserine; by PLK3. The residue at position 62 (Ser-62) is a Phosphoserine; by CDK1. The BH3 signature appears at 86 to 100 (VKQALREAGDEFELR). The BH1 motif lies at 129–148 (ELFRDGVNWGRIVAFFSFGG). The BH2 signature appears at 180-195 (PWIQENGGWDTFVELY). The helical transmembrane segment at 210–226 (FNRWFLTGMTLAGVVLL) threads the bilayer.

The protein belongs to the Bcl-2 family. In terms of assembly, homodimer. Heterodimers with BAX, BAK or BCL2. Heterodimerization with BAX does not seem to be required for anti-apoptotic activity. Interacts with BCL2L11. Interacts with BAD. Interacts with SIVA1 isoform 1; the interaction inhibits the anti-apoptotic activity. Interacts with BECN1 and PGAM5. Interacts with IKZF3. Interacts with HEBP2. Interacts with BOP. Interacts with p53/TP53 and BBC3; interaction with BBC3 disrupts the interaction with p53/TP53. Interacts with DNM1L and CLTA; DNM1L and BCL2L1 may form a complex in synaptic vesicles that also contains clathrin and MFF. Interacts with ATP5F1A and ATP5F1B; the interactions mediate the association of BCL2L1 with the mitochondrial membrane ATP synthase F(1)F(0) ATP synthase. Interacts with VDAC1. Interacts (via the loop between motifs BH4 and BH3) with NLRP1 (via LRR repeats), but not with NLRP2, NLRP3, NLRP4, PYCARD, nor MEFV. Interacts with BCL2L11 (via BH3). Interacts with RNF183. Interacts with GIMAP3/IAN4. Interacts with GIMAP5 and HSPA8/HSC70; the interaction between HSPA8 and BCL2L1 is impaired in the absence of GIMAP5. Interacts with CLU (isoform 4); this interaction releases and activates BAX and promotes cell death. Post-translationally, proteolytically cleaved by caspases during apoptosis. The cleaved protein, lacking the BH4 motif, has pro-apoptotic activity. Phosphorylated on Ser-62 by CDK1. This phosphorylation is partial in normal mitotic cells, but complete in G2-arrested cells upon DNA-damage, thus promoting subsequent apoptosis probably by triggering caspases-mediated proteolysis. Phosphorylated by PLK3, leading to regulate the G2 checkpoint and progression to cytokinesis during mitosis. Phosphorylation at Ser-49 appears during the S phase and G2, disappears rapidly in early mitosis during prometaphase, metaphase and early anaphase, and re-appears during telophase and cytokinesis. In terms of processing, ubiquitinated by RNF183 during prolonged ER stress, leading to degradation by the proteosome.

It localises to the mitochondrion membrane. The protein resides in the nucleus membrane. The protein localises to the mitochondrion matrix. It is found in the cytoplasm. Its subcellular location is the cytoskeleton. It localises to the microtubule organizing center. The protein resides in the centrosome. The protein localises to the cytosol. It is found in the cytoplasmic vesicle. Its subcellular location is the secretory vesicle. It localises to the synaptic vesicle membrane. Its function is as follows. Potent inhibitor of cell death. Inhibits activation of caspases. Appears to regulate cell death by blocking the voltage-dependent anion channel (VDAC) by binding to it and preventing the release of the caspase activator, CYC1, from the mitochondrial membrane. Also acts as a regulator of G2 checkpoint and progression to cytokinesis during mitosis. Regulates presynaptic plasticity, including neurotransmitter release and recovery, number of axonal mitochondria as well as size and number of synaptic vesicle clusters. During synaptic stimulation, increases ATP availability from mitochondria through regulation of mitochondrial membrane ATP synthase F(1)F(0) activity and regulates endocytic vesicle retrieval in hippocampal neurons through association with DMN1L and stimulation of its GTPase activity in synaptic vesicles. May attenuate inflammation impairing NLRP1-inflammasome activation, hence CASP1 activation and IL1B release. This is Bcl-2-like protein 1 (BCL2L1) from Sus scrofa (Pig).